The chain runs to 513 residues: ATP synthase subunit alpha (513 aa).

ATP is bound at residue 169-176 (GDRQTGKT).

Belongs to the ATPase alpha/beta chains family. F-type ATPases have 2 components, CF(1) - the catalytic core - and CF(0) - the membrane proton channel. CF(1) has five subunits: alpha(3), beta(3), gamma(1), delta(1), epsilon(1). CF(0) has three main subunits: a(1), b(2) and c(9-12). The alpha and beta chains form an alternating ring which encloses part of the gamma chain. CF(1) is attached to CF(0) by a central stalk formed by the gamma and epsilon chains, while a peripheral stalk is formed by the delta and b chains.

Its subcellular location is the cell inner membrane. The catalysed reaction is ATP + H2O + 4 H(+)(in) = ADP + phosphate + 5 H(+)(out). Its function is as follows. Produces ATP from ADP in the presence of a proton gradient across the membrane. The alpha chain is a regulatory subunit. This is ATP synthase subunit alpha from Escherichia coli O81 (strain ED1a).